The primary structure comprises 181 residues: MKKLAIVFTMLLIAGCSSSQDSANNQIDELGKENNSLFTFRNIQSGLMIHNGLHQHGRETIGWEIVPVKTPEEALVTDQSGWIMIRTPNTDQCLGTPDGRNLLKMTCNSTAKKTLFSLIPSTTGAVQIKSVLSGLCFLDSKNSGLSFETGKCIADFKKPFEVVPQSHLWMLNPLNTESPII.

Positions 1-15 (MKKLAIVFTMLLIAG) are cleaved as a signal peptide. Cysteine 16 carries the N-palmitoyl cysteine lipid modification. Residue cysteine 16 is the site of S-diacylglycerol cysteine attachment. In terms of domain architecture, Ricin B-type lectin spans 79-181 (QSGWIMIRTP…NPLNTESPII (103 aa)).

In terms of assembly, heterotrimer of 3 subunits, CdtA, CdtB and CdtC.

Its subcellular location is the cell outer membrane. Functionally, part of the tripartite complex that is required for the CDT activity. CdtC, along with CdtA, probably forms a heterodimeric subunit required for the delivery of CdtB. This is Cytolethal distending toxin subunit C (cdtC) from Escherichia coli.